A 4069-amino-acid chain; its full sequence is Cardiomyopathy-associated protein 5 (4069 aa).

Disordered stretches follow at residues 1–177 (MASR…SQVL), 341–387 (TVPS…DTPA), 442–525 (GLAA…EDSN), 538–558 (ESPLVSEKPFPPHMSPEVEHK), 597–705 (EYSV…VPSL), 732–793 (PSEE…RFTP), 844–872 (SSPDLVVASEHSFPPHTTEMTSECQAPPL), 890–948 (LERY…FSPD), 979–1009 (TSPSEHTILSDEDTEEAELFSPDSASQVSIP), 1041–1097 (ADEE…PEIP), 1160–1179 (VKEETKPASPHSVLPDSVPA), 1205–1237 (RKEEIVPDSQEATAHVSQDQKMEPQPPNVPESE), 1540–1575 (KETELPSSQNVSPASKHIIPKGKDEETASSSPELEN), 1594–1742 (PAVE…EEFQ), 1757–1809 (HPAD…ITEP), 1892–1988 (ENWM…VKLA), 2064–2175 (TISS…KKGI), 2187–2259 (FGSS…SGDG), 2385–2412 (PQQPKSASSNFASKNITKESEKPESIIL), 2425–2463 (SEDRLKKEMQNPTSLKISEEETKLRSVSPTEKKDNLENR), 2494–2527 (TQITLGSRSTELKESKADAMPQHFYQNEDYNERP), 2653–2706 (QEGN…VGTQ), and 2750–2862 (SSRD…SDVP). Positions 27–47 (ETEEESEGEEDETAAESEEEP) are enriched in acidic residues. A compositionally biased stretch (basic and acidic residues) spans 48–62 (DSRLSDQDEEGKIKQ). Residues 84 to 119 (TWETNSSRSSTPWASEESQTSGVCSREGSTVNSPPG) are compositionally biased toward polar residues. Over residues 130 to 153 (KVRKRTHKSKHGSPSLRRKGNRKR) the composition is skewed to basic residues. The residue at position 155 (Ser-155) is a Phosphoserine. 2 stretches are compositionally biased toward polar residues: residues 156–177 (FESQDVPTNKKGSPLTSASQVL) and 341–350 (TVPSYSSSGR). Positions 489–499 (LEPSISLSEPL) are enriched in low complexity. The span at 500–510 (MLEEPEKEEIE) shows a compositional bias: acidic residues. Residue Ser-631 is modified to Phosphoserine. Residues 640-659 (AYSPAAAPTSESSLSPSTTE) show a composition bias toward low complexity. 3 stretches are compositionally biased toward polar residues: residues 664–673 (NQSPLFSTVT), 692–701 (PDSTSASEYS), and 752–775 (PSLSPSTTEKTSECQSPLPSTATS). Residues 1049-1063 (TAATPVSEQFSSSQK) show a composition bias toward polar residues. Basic and acidic residues predominate over residues 1085 to 1094 (DKSEKAEIKP). Over residues 1214–1223 (QEATAHVSQD) the composition is skewed to polar residues. Over residues 1621–1630 (EPEKKDKPHQ) the composition is skewed to basic and acidic residues. A compositionally biased stretch (polar residues) spans 1639 to 1662 (SEFSSDLGRQSGSIGTKQAKSPIT). 3 stretches are compositionally biased toward basic and acidic residues: residues 1668–1687 (VLEKGPAELRSREGKEENRE), 1704–1714 (LREESQNEEIK), and 1786–1795 (ILDKLSEETG). The span at 1796–1808 (HPNSSQVLQSITE) shows a compositional bias: polar residues. Over residues 1935 to 1955 (SKDHTCEVRKQVLPHSAEESH) the composition is skewed to basic and acidic residues. The span at 1956–1980 (LSSQEAVSALDTSSGNTETLSSKSY) shows a compositional bias: polar residues. A compositionally biased stretch (basic and acidic residues) spans 2085–2124 (NEKEAHRSTPPFPEEKPLEESKMVQSKVIDDADEGKKPSP). The span at 2145-2155 (SPESPEVTQNP) shows a compositional bias: polar residues. 2 stretches are compositionally biased toward basic and acidic residues: residues 2162–2172 (AKPDLPEEKGK) and 2232–2250 (KPADHSLSEVKLKTADEPR). Residues 2387–2399 (QPKSASSNFASKN) are compositionally biased toward polar residues. A Phosphoserine modification is found at Ser-2404. The span at 2441–2461 (ISEEETKLRSVSPTEKKDNLE) shows a compositional bias: basic and acidic residues. 3 stretches are compositionally biased toward basic and acidic residues: residues 2661-2681 (KSSRDMPDHSEEKEQFRESEL), 2750-2769 (SSRDMPDHSEEKEQFKESEL), and 2777-2804 (ITKESMKEGFPSKESERTLARPFDETKS). Ser-2813 carries the post-translational modification Phosphoserine. Residues 2830-2847 (AVKKKEMPRSELTPERHT) show a composition bias toward basic and acidic residues. Positions 2964–2988 (SIDQEESEQMQDKLEYLEEKASFKT) form a coiled coil. The span at 3015-3031 (PLKENKQKETHKTKEEI) shows a compositional bias: basic and acidic residues. Disordered stretches follow at residues 3015–3037 (PLKENKQKETHKTKEEISTDSET), 3119–3156 (EKGHNILSHPETQSQNSADRNVSKDTKRDVDSKSPGMP), 3204–3231 (KKKEEETASEGDSVNSEASFPSRNSDTD), 3386–3421 (SGATHVQETSLEEPKILVPPEPSEERLRNSPVQDEY), and 3465–3495 (EFASEAEQSTPAEQKELGSERKEEDQLSSEV). Residues 3052 to 3365 (YFEKYTLIDY…GSHGNEVGNA (314 aa)) form a required for RYR2 clustering region. Over residues 3128 to 3138 (PETQSQNSADR) the composition is skewed to polar residues. The span at 3139 to 3150 (NVSKDTKRDVDS) shows a compositional bias: basic and acidic residues. The segment covering 3213–3227 (EGDSVNSEASFPSRN) has biased composition (polar residues). Phosphoserine is present on Ser-3228. Positions 3477–3489 (EQKELGSERKEED) are enriched in basic and acidic residues. Positions 3517-3544 (KCPISATDKVFGTHKDHEVSTLDTAISA) are amphipathic helix H1. A coiled-coil region spans residues 3544-3653 (AVKVQLAEFL…REAEELDEAV (110 aa)). The tract at residues 3545–3672 (VKVQLAEFLE…ERLLSAMEST (128 aa)) is B-box coiled-coil; BBC. Positions 3631–3648 (SMDTAKDTLETIVREAEE) are amphipathic helix H2. Fibronectin type-III domains lie at 3704–3805 (VPQP…TAPS) and 3806–3898 (TPVI…TRGT). Positions 3751 to 3767 (EVNELVEEYRLTVKESY) are amphipathic helix H3. Residues 3880 to 4065 (NAFGTSEQSE…LHLGIEPPDS (186 aa)) form the B30.2/SPRY domain.

As to quaternary structure, interacts with PRKAR2A. Interacts with ACTN2 and DTNBP1/dysbindin. Interacts with DES. Interacts with DMD/dystrophin. Interacts with the calcineurin catalytic subunit PPP3CA. Interacts with TTN. Interacts with CAPN3; this interaction, which results in CMYA5 proteolysis, may protect CAPN3 from autolysis. Interacts with FSD2. Identified in a complex composed of FSD2, CMYA5 and RYR2. Post-translationally, phosphorylated by PKA. In terms of tissue distribution, expressed in skeletal muscle; at a strong level and in heart.

It is found in the nucleus. The protein resides in the sarcoplasmic reticulum. Its subcellular location is the cytoplasm. The protein localises to the perinuclear region. It localises to the myofibril. It is found in the sarcomere. The protein resides in the m line. May serve as an anchoring protein that mediates the subcellular compartmentation of protein kinase A (PKA) via binding to PRKAR2A. May function as a repressor of calcineurin-mediated transcriptional activity. May attenuate calcineurin ability to induce slow-fiber gene program in muscle and may negatively modulate skeletal muscle regeneration. Plays a role in the assembly of ryanodine receptor (RYR2) clusters in striated muscle. The sequence is that of Cardiomyopathy-associated protein 5 (CMYA5) from Homo sapiens (Human).